Here is a 379-residue protein sequence, read N- to C-terminus: UDP-4-amino-4-deoxy-L-arabinose--oxoglutarate aminotransferase (379 aa).

Lys-182 bears the N6-(pyridoxal phosphate)lysine mark.

It belongs to the DegT/DnrJ/EryC1 family. ArnB subfamily. Homodimer. Pyridoxal 5'-phosphate serves as cofactor.

It carries out the reaction UDP-4-amino-4-deoxy-beta-L-arabinose + 2-oxoglutarate = UDP-beta-L-threo-pentopyranos-4-ulose + L-glutamate. It functions in the pathway nucleotide-sugar biosynthesis; UDP-4-deoxy-4-formamido-beta-L-arabinose biosynthesis; UDP-4-deoxy-4-formamido-beta-L-arabinose from UDP-alpha-D-glucuronate: step 2/3. The protein operates within bacterial outer membrane biogenesis; lipopolysaccharide biosynthesis. Its function is as follows. Catalyzes the conversion of UDP-4-keto-arabinose (UDP-Ara4O) to UDP-4-amino-4-deoxy-L-arabinose (UDP-L-Ara4N). The modified arabinose is attached to lipid A and is required for resistance to polymyxin and cationic antimicrobial peptides. The chain is UDP-4-amino-4-deoxy-L-arabinose--oxoglutarate aminotransferase from Escherichia coli O8 (strain IAI1).